The sequence spans 194 residues: Cysteine and glycine-rich protein 2 (194 aa).

Residues 10-61 form the LIM zinc-binding 1 domain; it reads CGACGRTVYHAEEVQCDGRSFHRCCFLCMVCRKNLDSTTVAIHDAEVYCKSC. The Nuclear localization signal signature appears at 64-69; sequence KKYGPK. The LIM zinc-binding 2 domain occupies 120–171; it reads CSRCGDSVYAAEKVIGAGKPWHKNCFRCAKCGKSLESTTLTEKEGEIYCKGC.

It is found in the nucleus. In terms of biological role, totally down-regulated in transformed cells. May therefore take part in the control of cell growth and differentiation. This is Cysteine and glycine-rich protein 2 (CSRP2) from Gallus gallus (Chicken).